A 414-amino-acid chain; its full sequence is tRNA(Ile)-lysidine synthase (414 aa).

13-18 (SGGIDS) contacts ATP.

The protein belongs to the tRNA(Ile)-lysidine synthase family.

Its subcellular location is the cytoplasm. It carries out the reaction cytidine(34) in tRNA(Ile2) + L-lysine + ATP = lysidine(34) in tRNA(Ile2) + AMP + diphosphate + H(+). Functionally, ligates lysine onto the cytidine present at position 34 of the AUA codon-specific tRNA(Ile) that contains the anticodon CAU, in an ATP-dependent manner. Cytidine is converted to lysidine, thus changing the amino acid specificity of the tRNA from methionine to isoleucine. The chain is tRNA(Ile)-lysidine synthase from Thermotoga maritima (strain ATCC 43589 / DSM 3109 / JCM 10099 / NBRC 100826 / MSB8).